Reading from the N-terminus, the 2849-residue chain is MNEMRTQVRIEFHALATQRKPSASPPTIEEDMGQGCTLEALVIPSRRAEQSTQHPDSSFMATVRGAKSVVVSQWQLLQAGSAGSAARPDGSGSESLAASSSWKPRRRLEAGGPCRSWLVFLVSREGWSDSNPGYRKQFICRPQEIGFHSEEHREAGTMAAKPPKKSSIPGVSIRQLVDEIPEGCSTPDFKQKPVTLALPEGKNAIFRAVVCGEPRPEVHWQSSKGDLSNSAKYQISSAPGREEHVLQINKLTGEDSDLYRCTALNAYGEATCSVRLTVIEVGFRKNRKRQKEPQEDLRKELMDFRKMLKKRAPPPTPEKKMESEQVWQLLVTADRKDYEKICMQYGIVDFRGMLRKLQEMKKEQEDRMAQYVSAIANLRHIKVTKEGVATFDLELDLKNLESKIYLYKDGEMIPYGVDNQTKHCLRRLGKRYHFQIQDLRPEDAGLYQVMVEDAVVFSTELESRTIPPRVVVPLAETRCEERGDAVFECTLSNPCPSATWHFQHRPLRLSDKYEVFVSPDGLTHRLVVKGASSSDMGLYSLNTGLHASSAWLVVEGGKDKGPQTTDTDHRLQTPEALASEAEDAGGISIKGGQSRERGSLKEISGAQLTAGPDRGAFGKHGYPLVVDEDIVNSTWGPGQDKKSFLEGGQLRVTLPGDSQSQREGDCGRSLPRRSHLQGEDTESDLGFLERGQQGPGRVDSENGRWETAGGQSAGSSHPRDRRLESRGEGQEHSEGHGSELDRYGQGQCHDPQLGAGAGQRVPWGSQFDAEGLQLKKEGTEMWGDCLDVTEGRGNLRKERGTAAGSSNRARLWEARGGSGAGSPCVPEFPRGGAHSSKAGMGPECWPGGDAGHGEAGVYWGAGGYPGQTSEGNDTQKSSLSGDRKLLGCTSPEAKAEGSFQSADGHGIVGRVYKPGPEGPEDLRSQKSGLQEIQGRNGQGSAGALGRTVEGSRSLQFPQSWTVGQREAGKPGGAEYEDIGPQDDTWSNLREMGGHCGSGVLASGGREGSVGGSQVAALMMSSQRVDARNHRLVTSPGLGVQGSGRTLGHMEGLRDPEAVGSEEEFWNGSGRSQGKGSRGGMGLGGPEWAESRNEEGWENSEGMASRNGATCRDGSRMQEGTGSGPDIGCKAPCGAPAETESGKWGTYSHDSGVPGGLWSGSKSQCSPAGKVSGREASLRNGSAGLHGMPSSEAQQRDVFQGHGQTGHIGEHHCARGLGSSETVGSVGGHGRKDSGTAGKVGEGYTEAEPGHSGGLSSWGHTGDYEDFRVLGAFREGDFGNGTGVPLSMGPRSLERGDKEGDGERISFLGARTSTVGTGNWDKARHPGAPSPHEAGSEGHWAQVSGNALGCRDGSGIPEPWSAGDKTAYGEESKGLGPERTGPDGEVAFRGSSSSLRGMGPASEASYKSGTWGPGAVGSGFKVDCRNDLGCSGSMGSESKAGYKNKIESHGVRELGDLTGYKNDLGPSELISSRNEARGLEHSGDILSWNKAGLRDGLGETGRMESKNGVGYRGSSVGPGEMGSERKMHLADGSGRLGGPGSLAAPKEHESVGLGSVYEGAAEIGSKYNREKVRGMGFRDATGPEVGSGVAGMLDITGGIAHGDSAMGTEKLGTPDRPYILSGGQGTKNSLGGCVSLGIPDALGAVGSVGKPGIREWKDDSGFQGSLRDRGTPSEEIRSVDQAGAIGTSRLLDSRGAVEDGSGSENDFDFNKSGLETTGRCRVADQQGVTPQGCGGSLLNGRRKGTSSGSLSGVGQEVDRSSTPGRETKVMSGPGSGRATSHTRAADWEDGVQCSFGASSSLPDTDAIFRETHAGQGAFKGRGCETGQGAAGECQGPRSLGSRGSEFVGGRAGFTGSSSVPGRRDSTIYGDAVTSKPQEPQNELYSPLGRRDFKSVSGGIQEPGFQRGTGQGEGKESFQESGSWEAELDEVQGSRASAKFENQGGKDPGWSGQKPGPCGSRHQVQSGTEVGSAKRATPQGAGGLEPWAGSEDRGSLREPWSEDRRQGPHRHLGSRRDTQEGRSDVCGQAQDATQSPRSRYQPGTGRSSSEARGSMDHFSQGLTDTEVQLGEAAIVSCTLASDLGPGTWFKDGVKLTAQDGVIFEQDGLTHRLILTHVEGTQAGKYTFVAGCQHSEASLTVQDPPTIAPDVTETLREPLVFKAGKPVTVKIPFQSRLPVQAAWRKDGNEVVGGDHKGIQLALADGYTWLCLPSVCRKDSGRYSVTLRSEGGCVQAEFTLQVIDKPQPPQGPLEVQDCHRAGVCLRWLPPRDNGGQVIQHYVVERRQAGRSTWLKVGEPPSDSTSFTDTSVEQGKKYAFRVRAVTSVGAGDALESEEVLVAPEALPGPPSAPAILSASSQSITLTWGAPQGPGSNHILGYLIEKHKKGSNTWMAVNEQPVSERRYTVVGLRQGCQYEFRVTAVTLSGPGDPGPPSDAVFARDPMRPPGPVRDLQVTDTSNTSITVSWMVPDARDADEAQGYIVELCGSDSHQWSPCHVGTVPGTTFTAKGLRPQEGYFVRVTAVNDGGRSQATSLDTLVHAMPATVCPRFLMDSGTKDTLMVRVGDSIRVPLSFEAAPMPEVTWLKDGLPLPKRSVTTVKAGLTQLLIPAASLSDCGRYTVMLRNLQGKEATHSFFINVAACPQAPGSIYLQENVPGTVTVQWEPSPDEAQGIPLHYTVLMRSSSHRSWHEVADHVRTNRFTLLGVLPGHEYHFRVLAKNELGVSKPSDTSQPWCIPRQRDRFTVKSPTYQDPDLSQKPRFLVGLRAHLLPQGCECRMTCAVQGSPQPHVTWFKNDQSLDRNPAVYSTDLLGVCSLVIPSVSLKDSGEYKAVAKNPLGQAVSTATLIVTEYDS.

The tract at residues 82–108 is disordered; it reads AGSAARPDGSGSESLAASSSWKPRRRL. Positions 90–101 are enriched in low complexity; the sequence is GSGSESLAASSS. The Ig-like 1 domain maps to 187–277; sequence PDFKQKPVTL…GEATCSVRLT (91 aa). The stretch at 347-380 forms a coiled coil; it reads IVDFRGMLRKLQEMKKEQEDRMAQYVSAIANLRH. Positions 468-557 constitute an Ig-like 2 domain; it reads PRVVVPLAET…SSAWLVVEGG (90 aa). 12 disordered regions span residues 577-600, 652-760, 864-924, 962-981, 1061-1103, 1221-1258, 1312-1338, 1350-1384, 1498-1523, 1654-1675, 1724-1780, and 1827-2055; these read LASEAEDAGGISIKGGQSRERGSL, VTLP…AGQR, YPGQ…DLRS, VGQREAGKPGGAEYEDIGPQ, EEEF…EGMA, TVGSVGGHGRKDSGTAGKVGEGYTEAEPGHSGGLSSWG, STVGTGNWDKARHPGAPSPHEAGSEGH, RDGSGIPEPWSAGDKTAYGEESKGLGPERTGPDGE, ETGRMESKNGVGYRGSSVGPGEMGSE, EWKDDSGFQGSLRDRGTPSEEI, QQGV…ATSH, and GAAG…SMDH. A compositionally biased stretch (basic and acidic residues) spans 717 to 742; it reads HPRDRRLESRGEGQEHSEGHGSELDR. Residues 866–880 are compositionally biased toward polar residues; it reads GQTSEGNDTQKSSLS. A compositionally biased stretch (gly residues) spans 1070 to 1084; that stretch reads RSQGKGSRGGMGLGG. A compositionally biased stretch (polar residues) spans 1873-1882; the sequence is SKPQEPQNEL. Basic and acidic residues-rich tracts occupy residues 1988-2004 and 2012-2021; these read SEDRGSLREPWSEDRRQ and SRRDTQEGRS. One can recognise an Ig-like 3 domain in the interval 2034 to 2137; that stretch reads PRSRYQPGTG…GCQHSEASLT (104 aa). Fibronectin type-III domains lie at 2244 to 2339, 2344 to 2443, and 2445 to 2540; these read PPQG…VAPE, PPSA…MRPP, and PVRD…AMPA. One can recognise an Ig-like 4 domain in the interval 2544 to 2628; it reads PRFLMDSGTK…LRNLQGKEAT (85 aa). The 95-residue stretch at 2641-2735 folds into the Fibronectin type-III 4 domain; sequence APGSIYLQEN…TSQPWCIPRQ (95 aa). The region spanning 2749–2845 is the Ig-like 5 domain; it reads PDLSQKPRFL…AVSTATLIVT (97 aa).

Interacts with FLNC. Interacts with KY. As to expression, isoform 1, isoform 3 and isoform 4 are expressed in skeletal muscle while isoform 2 is detected in both skeletal muscle and heart (at protein level).

It localises to the nucleus. The protein localises to the cytoplasm. It is found in the myofibril. Its subcellular location is the sarcomere. The protein resides in the z line. The sequence is that of Immunoglobulin-like and fibronectin type III domain-containing protein 1 (Igfn1) from Mus musculus (Mouse).